Here is a 425-residue protein sequence, read N- to C-terminus: Dihydroorotase (425 aa).

2 residues coordinate Zn(2+): His-56 and His-58. Residues 58–60 (HYR) and Asn-90 each bind substrate. 3 residues coordinate Zn(2+): Asp-148, His-175, and His-228. Asn-274 serves as a coordination point for substrate. Asp-301 is a Zn(2+) binding site. Asp-301 is an active-site residue. Residues His-305 and 319-320 (FG) each bind substrate.

Belongs to the metallo-dependent hydrolases superfamily. DHOase family. Class I DHOase subfamily. Zn(2+) is required as a cofactor.

The catalysed reaction is (S)-dihydroorotate + H2O = N-carbamoyl-L-aspartate + H(+). Its pathway is pyrimidine metabolism; UMP biosynthesis via de novo pathway; (S)-dihydroorotate from bicarbonate: step 3/3. Its function is as follows. Catalyzes the reversible cyclization of carbamoyl aspartate to dihydroorotate. The protein is Dihydroorotase of Lactobacillus gasseri (strain ATCC 33323 / DSM 20243 / BCRC 14619 / CIP 102991 / JCM 1131 / KCTC 3163 / NCIMB 11718 / NCTC 13722 / AM63).